The chain runs to 1104 residues: Receptor-mediated endocytosis protein 6 (1104 aa).

Positions 156–389 (LKIAQVVCYL…EMMDSLLVEN (234 aa)) constitute a Ras-GAP domain. The tract at residues 663–682 (SSLAKQPSGMVSSASAQNIP) is disordered. The 139-residue stretch at 966–1104 (QKKDKLLQSV…SAVEYIKTIL (139 aa)) folds into the VPS9 domain.

This sequence belongs to the GAPVD1 family. As to quaternary structure, interacts with GDP-bound rab-5. Interacts with alpha-adaptin.

It localises to the membrane. The protein localises to the cytoplasmic vesicle. The protein resides in the clathrin-coated vesicle. Acts both as a GTPase-activating protein (GAP) and a guanine nucleotide exchange factor (GEF), and participates in endocytosis. Acts by regulating the activation of rab-5 by exchanging bound GDP for free GTP at clathrin coated pits. This chain is Receptor-mediated endocytosis protein 6 (rme-6), found in Caenorhabditis briggsae.